The sequence spans 512 residues: Gasdermin-E (512 aa).

The tract at residues 1 to 56 is membrane targeting domain; it reads MFAKATRNFLKEVDAGGDLISVSHLNDSDKLQLLSLVTKKKRYWCWQRPKYQILSA. Cys-45 is subject to S-(2-succinyl)cysteine. Lys-120 is covalently cross-linked (Glycyl lysine isopeptide (Lys-Gly) (interchain with G-Cter in ubiquitin)). Cys-156, Cys-168, and Cys-180 each carry S-(2-succinyl)cysteine. Lys-189 is covalently cross-linked (Glycyl lysine isopeptide (Lys-Gly) (interchain with G-Cter in ubiquitin)). Cys-235, Cys-411, and Cys-420 each carry S-(2-succinyl)cysteine.

It belongs to the gasdermin family. In terms of assembly, homooligomer; homooligomeric ring-shaped pore complex containing 27-28 subunits when inserted in the membrane. Cleavage at Asp-270 by CASP3 (mature and uncleaved precursor forms) or granzyme B (GZMB) relieves autoinhibition and is sufficient to initiate pyroptosis. In terms of processing, succination by the Krebs cycle intermediate fumarate, which leads to S-(2-succinyl)cysteine residues, inhibits processing by caspases, and ability to initiate pyroptosis. Succination modification is catalyzed by a non-enzymatic reaction caused by an accumulation of fumarate. Post-translationally, ubiquitinated on Lys-120 and Lys-189 via 'Lys-48'-linked polyubiquitin chains, leading to proteasomal degradation. Deubiquitinated by USP48, leading to increased stability. Palmitoylated. As to expression, expressed in spleen, kidney, large and small intestine, testicle, stomach and by CD4(+)CD(8+) T cells in thymus. Expressed by macrophages.

Its subcellular location is the cell membrane. It is found in the cytoplasm. It localises to the cytosol. Its activity is regulated as follows. The full-length protein before cleavage is inactive: intramolecular interactions between N- and C-terminal domains mediate autoinhibition in the absence of activation signal. The intrinsic pyroptosis-inducing activity is carried by the released N-terminal moiety (Gasdermin-E, N-terminal) following cleavage by CASP3 or granzyme B (GZMB). Activated by NLRP1 in the absence of GSDMD expression: NLRP1 cleaves and activates CASP8, promoting downstream activation of CASP3 and subsequent activation of GSDME. Functionally, precursor of a pore-forming protein that converts non-inflammatory apoptosis to pyroptosis. This form constitutes the precursor of the pore-forming protein: upon cleavage, the released N-terminal moiety (Gasdermin-E, N-terminal) binds to membranes and forms pores, triggering pyroptosis. Pore-forming protein produced by cleavage by CASP3 or granzyme B (GZMB), which converts non-inflammatory apoptosis to pyroptosis or promotes granzyme-mediated pyroptosis, respectively. After cleavage, moves to the plasma membrane, homooligomerizes within the membrane and forms pores of 10-15 nanometers (nm) of inner diameter, allowing the release of mature interleukins (IL1B and IL16) and triggering pyroptosis. Binds to inner leaflet lipids, bisphosphorylated phosphatidylinositols, such as phosphatidylinositol (4,5)-bisphosphate. Cleavage by CASP3 switches CASP3-mediated apoptosis induced by TNF or danger signals, such as chemotherapy drugs, to pyroptosis. Mediates secondary necrosis downstream of the mitochondrial apoptotic pathway and CASP3 activation as well as in response to viral agents. Exhibits bactericidal activity. Cleavage by GZMB promotes tumor suppressor activity by triggering robust anti-tumor immunity. Suppresses tumors by mediating granzyme-mediated pyroptosis in target cells of natural killer (NK) cells: cleavage by granzyme B (GZMB), delivered to target cells from NK-cells, triggers pyroptosis of tumor cells and tumor suppression. May play a role in the p53/TP53-regulated cellular response to DNA damage. The sequence is that of Gasdermin-E from Mus musculus (Mouse).